The primary structure comprises 432 residues: Glutamate-1-semialdehyde 2,1-aminomutase (432 aa).

Residue Lys270 is modified to N6-(pyridoxal phosphate)lysine.

This sequence belongs to the class-III pyridoxal-phosphate-dependent aminotransferase family. HemL subfamily. In terms of assembly, homodimer. The cofactor is pyridoxal 5'-phosphate.

The protein resides in the cytoplasm. The catalysed reaction is (S)-4-amino-5-oxopentanoate = 5-aminolevulinate. It functions in the pathway porphyrin-containing compound metabolism; protoporphyrin-IX biosynthesis; 5-aminolevulinate from L-glutamyl-tRNA(Glu): step 2/2. The protein is Glutamate-1-semialdehyde 2,1-aminomutase of Acinetobacter baumannii (strain ACICU).